The sequence spans 309 residues: Serine/threonine-protein phosphatase 2A catalytic subunit beta isoform (309 aa).

Residues D57, H59, D85, and N117 each contribute to the Mn(2+) site. H118 serves as the catalytic Proton donor. Mn(2+) contacts are provided by H167 and H241. At Y307 the chain carries Phosphotyrosine. Residue L309 is modified to Leucine methyl ester.

It belongs to the PPP phosphatase family. PP-1 subfamily. As to quaternary structure, found in a complex with at least ARL2, PPP2CB, PPP2R1A, PPP2R2A, PPP2R5E and TBCD. Interacts with TBCD. PP2A consists of a common heterodimeric core enzyme (composed of a 36 kDa catalytic subunit (subunit C) and a 65 kDa constant regulatory subunit (PR65) (subunit A)) that associates with a variety of regulatory subunits. Proteins that associate with the core dimer include three families of regulatory subunits B (the R2/B/PR55/B55, R3/B''/PR72/PR130/PR59 and R5/B'/B56 families), the 48 kDa variable regulatory subunit, viral proteins, and cell signaling molecules. Binds PPME1. May indirectly interact with SGO1, most probably through regulatory B56 subunits. Interacts with CTTNBP2NL. Interacts with PTPA. Part of the core of STRIPAK complexes composed of PP2A catalytic and scaffolding subunits, the striatins (PP2A regulatory subunits), the striatin-associated proteins MOB4, STRIP1 and STRIP2, PDCD10 and members of the STE20 kinases, such as STK24 and STK26. The cofactor is Mn(2+). Post-translationally, reversibly methyl esterified on Leu-309 by leucine carboxyl methyltransferase 1 (Lcmt1) and protein phosphatase methylesterase 1 (PPME1). Carboxyl methylation influences the affinity of the catalytic subunit for the different regulatory subunits, thereby modulating the PP2A holoenzyme's substrate specificity, enzyme activity and cellular localization. In terms of processing, phosphorylation of either threonine (by autophosphorylation-activated protein kinase) or tyrosine results in inactivation of the phosphatase. Auto-dephosphorylation has been suggested as a mechanism for reactivation. May be monoubiquitinated by NOSIP.

Its subcellular location is the cytoplasm. The protein resides in the nucleus. It localises to the chromosome. It is found in the centromere. The protein localises to the cytoskeleton. Its subcellular location is the spindle pole. It catalyses the reaction O-phospho-L-seryl-[protein] + H2O = L-seryl-[protein] + phosphate. The catalysed reaction is O-phospho-L-threonyl-[protein] + H2O = L-threonyl-[protein] + phosphate. Its function is as follows. Catalytic subunit of protein phosphatase 2A (PP2A), a serine/threonine phosphatase involved in the regulation of a wide variety of enzymes, signal transduction pathways, and cellular events. PP2A can modulate the activity of phosphorylase B kinase, casein kinase 2, mitogen-stimulated S6 kinase, and MAP-2 kinase. Part of the striatin-interacting phosphatase and kinase (STRIPAK) complexes. STRIPAK complexes have critical roles in protein (de)phosphorylation and are regulators of multiple signaling pathways including Hippo, MAPK, nuclear receptor and cytoskeleton remodeling. Different types of STRIPAK complexes are involved in a variety of biological processes such as cell growth, differentiation, apoptosis, metabolism and immune regulation. In Oryctolagus cuniculus (Rabbit), this protein is Serine/threonine-protein phosphatase 2A catalytic subunit beta isoform (PPP2CB).